The chain runs to 576 residues: Arginine--tRNA ligase (576 aa).

Residues 122–132 carry the 'HIGH' region motif; it reads PNVAKEMHVGH.

This sequence belongs to the class-I aminoacyl-tRNA synthetase family. Monomer.

The protein resides in the cytoplasm. It catalyses the reaction tRNA(Arg) + L-arginine + ATP = L-arginyl-tRNA(Arg) + AMP + diphosphate. This chain is Arginine--tRNA ligase, found in Hamiltonella defensa subsp. Acyrthosiphon pisum (strain 5AT).